The primary structure comprises 282 residues: D-alanine aminotransferase (282 aa).

Tyr-32 provides a ligand contact to substrate. Arg-51 provides a ligand contact to pyridoxal 5'-phosphate. The substrate site is built by Arg-99 and His-101. The Proton acceptor role is filled by Lys-146. N6-(pyridoxal phosphate)lysine is present on Lys-146. Glu-178 provides a ligand contact to pyridoxal 5'-phosphate.

The protein belongs to the class-IV pyridoxal-phosphate-dependent aminotransferase family. Homodimer. Pyridoxal 5'-phosphate is required as a cofactor.

It catalyses the reaction D-alanine + 2-oxoglutarate = D-glutamate + pyruvate. In terms of biological role, acts on the D-isomers of alanine, leucine, aspartate, glutamate, aminobutyrate, norvaline and asparagine. The enzyme transfers an amino group from a substrate D-amino acid to the pyridoxal phosphate cofactor to form pyridoxamine and an alpha-keto acid in the first half-reaction. The second half-reaction is the reverse of the first, transferring the amino group from the pyridoxamine to a second alpha-keto acid to form the product D-amino acid via a ping-pong mechanism. This is an important process in the formation of D-alanine and D-glutamate, which are essential bacterial cell wall components. In Staphylococcus aureus (strain N315), this protein is D-alanine aminotransferase (dat).